Reading from the N-terminus, the 805-residue chain is 1,4-alpha-glucan-branching enzyme 2-2, chloroplastic/amyloplastic (805 aa).

The N-terminal 32 residues, 1–32 (MVVIHGVSLTPRFTLPSRPLNTGFNAGNSTLS), are a transit peptide targeting the chloroplast. Aspartate 451 acts as the Nucleophile in catalysis. The active-site Proton donor is glutamate 506.

Belongs to the glycosyl hydrolase 13 family. GlgB subfamily. As to quaternary structure, monomer. As to expression, expressed in seedlings, roots, stems, leaves, inflorescences, seeds and flowers.

Its subcellular location is the plastid. The protein localises to the chloroplast stroma. It is found in the amyloplast. It catalyses the reaction Transfers a segment of a (1-&gt;4)-alpha-D-glucan chain to a primary hydroxy group in a similar glucan chain.. It functions in the pathway glycan biosynthesis; starch biosynthesis. Its function is as follows. Catalyzes the formation of the alpha-1,6-glucosidic linkages in starch by scission of a 1,4-alpha-linked oligosaccharide from growing alpha-1,4-glucan chains and the subsequent attachment of the oligosaccharide to the alpha-1,6 position. The chain is 1,4-alpha-glucan-branching enzyme 2-2, chloroplastic/amyloplastic (SBE2.2) from Arabidopsis thaliana (Mouse-ear cress).